Reading from the N-terminus, the 171-residue chain is Galectin-related protein (171 aa).

One can recognise a Galectin domain in the interval 38–170; it reads PFCGHIKGGM…INGDLQLTKL (133 aa).

Does not bind lactose, and may not bind carbohydrates. The sequence is that of Galectin-related protein (lgalsl) from Xenopus tropicalis (Western clawed frog).